A 1551-amino-acid polypeptide reads, in one-letter code: Envelopment polyprotein (1551 aa).

Residues 1-17 form the signal peptide; it reads MSKRVLIIAVVVYLVFT. Residues 18–546 lie on the Lumenal side of the membrane; it reads TQNQITGNHT…CRMSSRPTVA (529 aa). Residues 24–66 form a disordered region; the sequence is GNHTTINSSSPSTTEASSTPTVSRTPQTTTTSTAVSTTITATT. Asparagine 25 and asparagine 30 each carry an N-linked (GlcNAc...) asparagine; by host glycan. Residues 31-66 are compositionally biased toward low complexity; sequence SSSPSTTEASSTPTVSRTPQTTTTSTAVSTTITATT. N-linked (GlcNAc...) asparagine; by host glycosylation is found at asparagine 80, asparagine 142, and asparagine 413. Residues 547–567 form a helical membrane-spanning segment; it reads LLLGIWIGCGYILTCIFSFLL. The Cytoplasmic segment spans residues 568-675; that stretch reads YHLILFFANC…ISVGIFLKRT (108 aa). A helical membrane pass occupies residues 676–696; the sequence is TWLVVLLVLLGLAISPVQGAP. Over 697–704 the chain is Lumenal; that stretch reads TEVSNVKQ. A helical transmembrane segment spans residues 705 to 725; the sequence is DGDYSICYFIFGCLVTAALLL. The Cytoplasmic segment spans residues 726-823; sequence KVKRTNSNGI…REKLFTTGLQ (98 aa). A helical membrane pass occupies residues 824–844; that stretch reads LFINKTNVVVFALIMCFLLLL. Topologically, residues 845–1451 are lumenal; that stretch reads TGHNASAFDS…GDFFKHYIGS (607 aa). N-linked (GlcNAc...) asparagine; by host glycans are attached at residues asparagine 848, asparagine 1201, asparagine 1258, and asparagine 1420. A disulfide bridge links cysteine 1023 with cysteine 1216. A helical membrane pass occupies residues 1452–1472; it reads IAVGVLGTVLPFALLILFFIY. Over 1473-1551 the chain is Cytoplasmic; the sequence is GDKMLWPFKV…KKEKKLSEIA (79 aa).

This sequence belongs to the nairovirus envelope glycoprotein family. As to quaternary structure, heterodimer with glycoprotein C; in prefusion state. Heterodimer with glycoprotein N; in prefusion state. Homotrimeric; in postfusion state. Specific enzymatic cleavage by host MBTPS1/S1P/SKI-1 endopeptidase yield glycoprotein N. Specific enzymatic cleavages by host furin-like protease and MBTPS1/S1P endopeptidase yield GP38. Post-translationally, glycosylated.

It localises to the host endoplasmic reticulum membrane. It is found in the virion membrane. The protein resides in the host Golgi apparatus membrane. Its function is as follows. Glycoprotein N and glycoprotein C interact with each other and are present at the surface of the virion. Glycoprotein N probably locks the Gn-Gc complex in a prefusion state. Glycoprotein N and glycoprotein C are able to attach the virion to host cell receptors. This attachment induces virion internalization predominantly through clathrin-dependent endocytosis. Glycoprotein C and glycoprotein N interact with each other and are present at the surface of the virion. The spikes at the surface of the virion are formed by an N-terminal extension of glycoprotein C. Glycoprotein N and glycoprotein C are able to attach the virion to host cell receptors. This attachment induces virion internalization predominantly through clathrin-dependent endocytosis. Class II fusion protein that promotes fusion of viral membrane with host endosomal membrane after endocytosis of the virion. Exposure to potassium is necessary for the conformational change leading to fusion. This Amblyomma variegatum (Tropical bont tick) protein is Envelopment polyprotein (GP).